We begin with the raw amino-acid sequence, 317 residues long: Ribosomal protein L11 methyltransferase (317 aa).

S-adenosyl-L-methionine-binding residues include threonine 158, glycine 179, aspartate 201, and asparagine 244.

This sequence belongs to the methyltransferase superfamily. PrmA family.

The protein localises to the cytoplasm. It catalyses the reaction L-lysyl-[protein] + 3 S-adenosyl-L-methionine = N(6),N(6),N(6)-trimethyl-L-lysyl-[protein] + 3 S-adenosyl-L-homocysteine + 3 H(+). Functionally, methylates ribosomal protein L11. This Streptococcus pyogenes serotype M3 (strain ATCC BAA-595 / MGAS315) protein is Ribosomal protein L11 methyltransferase.